The chain runs to 413 residues: High zinc activated nuclear receptor protein (413 aa).

Residues 11–86 (LGNCKICLQR…EGMKIELVQL (76 aa)) constitute a DNA-binding region (nuclear receptor). 2 consecutive NR C4-type zinc fingers follow at residues 14-34 (CKIC…CRAC) and 50-69 (CKEK…CRSC). The required for zinc-binding stretch occupies residues 101–412 (SIDPLFTPNV…TSQCIVHTKN (312 aa)). The NR LBD domain occupies 135–396 (QMTSGYAMFL…VCCKNFKEDA (262 aa)).

Belongs to the nuclear hormone receptor family. Weakly expressed in intestinal cells in the absence of zinc supplementation. Upon zinc supplementation, accumulates in alimentary tract cells, and it is mainly expressed in the intestine.

It is found in the nucleus. The protein resides in the cytoplasm. Nuclear receptor transcription factor that binds to DNA enhancer elements to promote the transcription of genes required to maintain micronutrient homeostasis. Direct binding to its ligand zinc allows for nuclear accumulation and activation, which thereby induces the transcription of genes required to promote the storage and detoxification of excess dietary zinc. This in turn, allows for internal zinc levels to be detected and regulated. The protein is High zinc activated nuclear receptor protein of Caenorhabditis elegans.